Reading from the N-terminus, the 949-residue chain is Inactive atromentin synthetase invA3 (949 aa).

The adenylation (A) domain stretch occupies residues 38-460; it reads RAVSQYPNHE…SGRIKDTVVV (423 aa). Residues 592-670 enclose the Carrier domain; the sequence is ALSTETEKTL…NLAKYVDSLV (79 aa). Residues 597 to 667 are thiolation and peptide carrier (T) domain; the sequence is TEKTLAGIYA…VISNLAKYVD (71 aa). Residue Ser-629 is modified to O-(pantetheine 4'-phosphoryl)serine. Residues 693-934 form a thioesterase (TE) domain region; it reads PIFMVHPGMA…YTLMDFDHVA (242 aa).

It belongs to the ATP-dependent AMP-binding enzyme family.

Its function is as follows. Inactive atromentin synthetase homolog. While the invA3 adenylation (A) domain is capable of adenylating 4-hydroxyphenylpyruvate (4-HPP), the invA3 enzyme is inactive because of its non-functional thioesterase (TE) domain. This is Inactive atromentin synthetase invA3 (invA3) from Paxillus involutus (Naked brimcap).